Reading from the N-terminus, the 179-residue chain is Probable F-box protein At3g25550 (179 aa).

In terms of domain architecture, F-box spans 19-55; sequence IPNDDVLEEIIVRLPVKTLTRFQTVSKHWRHTIKSRN.

This is Probable F-box protein At3g25550 from Arabidopsis thaliana (Mouse-ear cress).